The primary structure comprises 118 residues: Large ribosomal subunit protein bL20 (118 aa).

This sequence belongs to the bacterial ribosomal protein bL20 family.

Binds directly to 23S ribosomal RNA and is necessary for the in vitro assembly process of the 50S ribosomal subunit. It is not involved in the protein synthesizing functions of that subunit. The polypeptide is Large ribosomal subunit protein bL20 (Pseudomonas fluorescens (strain ATCC BAA-477 / NRRL B-23932 / Pf-5)).